Consider the following 27-residue polypeptide: Palustrin-1d (27 aa).

The cysteines at positions 21 and 27 are disulfide-linked.

In terms of tissue distribution, expressed by the skin glands.

It is found in the secreted. Functionally, antimicrobial activity against Gram-negative bacterium E.coli. This Lithobates palustris (Pickerel frog) protein is Palustrin-1d.